Reading from the N-terminus, the 247-residue chain is D-alanyl-D-alanine dipeptidase (247 aa).

The Zn(2+) site is built by His-140 and Asp-147. Glu-215 serves as the catalytic Proton donor/acceptor. Zn(2+) is bound at residue His-218.

The protein belongs to the peptidase M15D family. Requires Zn(2+) as cofactor.

It is found in the cytoplasm. The catalysed reaction is D-alanyl-D-alanine + H2O = 2 D-alanine. Catalyzes hydrolysis of the D-alanyl-D-alanine dipeptide. May have a role in cell-wall turnover. The chain is D-alanyl-D-alanine dipeptidase from Synechocystis sp. (strain ATCC 27184 / PCC 6803 / Kazusa).